The following is a 253-amino-acid chain: Imidazole glycerol phosphate synthase subunit HisF (253 aa).

Active-site residues include D11 and D130.

It belongs to the HisA/HisF family. In terms of assembly, heterodimer of HisH and HisF.

Its subcellular location is the cytoplasm. The enzyme catalyses 5-[(5-phospho-1-deoxy-D-ribulos-1-ylimino)methylamino]-1-(5-phospho-beta-D-ribosyl)imidazole-4-carboxamide + L-glutamine = D-erythro-1-(imidazol-4-yl)glycerol 3-phosphate + 5-amino-1-(5-phospho-beta-D-ribosyl)imidazole-4-carboxamide + L-glutamate + H(+). Its pathway is amino-acid biosynthesis; L-histidine biosynthesis; L-histidine from 5-phospho-alpha-D-ribose 1-diphosphate: step 5/9. IGPS catalyzes the conversion of PRFAR and glutamine to IGP, AICAR and glutamate. The HisF subunit catalyzes the cyclization activity that produces IGP and AICAR from PRFAR using the ammonia provided by the HisH subunit. The chain is Imidazole glycerol phosphate synthase subunit HisF from Clostridium botulinum (strain 657 / Type Ba4).